The chain runs to 371 residues: tRNA-specific 2-thiouridylase MnmA (371 aa).

Residues 24–31 (AMSGGVDS) and L50 each bind ATP. C119 acts as the Nucleophile in catalysis. C119 and C215 are joined by a disulfide. G143 is a binding site for ATP. The tract at residues 165–167 (KDQ) is interaction with tRNA. C215 (cysteine persulfide intermediate) is an active-site residue.

It belongs to the MnmA/TRMU family.

Its subcellular location is the cytoplasm. It catalyses the reaction S-sulfanyl-L-cysteinyl-[protein] + uridine(34) in tRNA + AH2 + ATP = 2-thiouridine(34) in tRNA + L-cysteinyl-[protein] + A + AMP + diphosphate + H(+). Its function is as follows. Catalyzes the 2-thiolation of uridine at the wobble position (U34) of tRNA, leading to the formation of s(2)U34. This chain is tRNA-specific 2-thiouridylase MnmA, found in Neorickettsia sennetsu (strain ATCC VR-367 / Miyayama) (Ehrlichia sennetsu).